Reading from the N-terminus, the 84-residue chain is Cell division topological specificity factor (84 aa).

Belongs to the MinE family.

Its function is as follows. Prevents the cell division inhibition by proteins MinC and MinD at internal division sites while permitting inhibition at polar sites. This ensures cell division at the proper site by restricting the formation of a division septum at the midpoint of the long axis of the cell. This is Cell division topological specificity factor from Ralstonia nicotianae (strain ATCC BAA-1114 / GMI1000) (Ralstonia solanacearum).